The chain runs to 384 residues: Deoxyguanosinetriphosphate triphosphohydrolase-like protein (384 aa).

The region spanning 62 to 198 is the HD domain; the sequence is RLTHSLEVST…AALADDISYI (137 aa).

The protein belongs to the dGTPase family. Type 2 subfamily.

This chain is Deoxyguanosinetriphosphate triphosphohydrolase-like protein, found in Rickettsia peacockii (strain Rustic).